The primary structure comprises 316 residues: Transaldolase (316 aa).

Lys131 serves as the catalytic Schiff-base intermediate with substrate.

It belongs to the transaldolase family. Type 1 subfamily. In terms of assembly, homodimer.

The protein resides in the cytoplasm. It catalyses the reaction D-sedoheptulose 7-phosphate + D-glyceraldehyde 3-phosphate = D-erythrose 4-phosphate + beta-D-fructose 6-phosphate. It functions in the pathway carbohydrate degradation; pentose phosphate pathway; D-glyceraldehyde 3-phosphate and beta-D-fructose 6-phosphate from D-ribose 5-phosphate and D-xylulose 5-phosphate (non-oxidative stage): step 2/3. In terms of biological role, transaldolase is important for the balance of metabolites in the pentose-phosphate pathway. The protein is Transaldolase of Sodalis glossinidius (strain morsitans).